Here is a 161-residue protein sequence, read N- to C-terminus: Small ribosomal subunit protein uS19 (161 aa).

Residues 1–19 (MARQKKYSGKGGARKKNKQ) are compositionally biased toward basic residues. Residues 1 to 26 (MARQKKYSGKGGARKKNKQKQSVAPR) form a disordered region.

Belongs to the universal ribosomal protein uS19 family.

In terms of biological role, protein S19 forms a complex with S13 that binds strongly to the 16S ribosomal RNA. This Methanococcus maripaludis (strain C6 / ATCC BAA-1332) protein is Small ribosomal subunit protein uS19.